A 242-amino-acid polypeptide reads, in one-letter code: Large ribosomal subunit protein uL1 (242 aa).

It belongs to the universal ribosomal protein uL1 family. As to quaternary structure, part of the 50S ribosomal subunit.

Functionally, binds directly to 23S rRNA. The L1 stalk is quite mobile in the ribosome, and is involved in E site tRNA release. Its function is as follows. Protein L1 is also a translational repressor protein, it controls the translation of the L11 operon by binding to its mRNA. The sequence is that of Large ribosomal subunit protein uL1 from Streptomyces sp. (strain FRI-5).